Consider the following 1183-residue polypeptide: Polyphosphatidylinositol phosphatase INP52 (1183 aa).

Low complexity predominate over residues 133 to 153 (PPSISTHSSRSSLRSSSSRSL). Positions 133–161 (PPSISTHSSRSSLRSSSSRSLNAQEQAPK) are disordered. Position 152 is a phosphoserine (Ser152). The SAC domain occupies 167–507 (LRKLLSNGSF…GDQISQIYTG (341 aa)). Ser522 is modified (phosphoserine). Over residues 955 to 968 (SPLLSGPSPQPSVV) the composition is skewed to low complexity. Residues 955–1183 (SPLLSGPSPQ…VHPLKPCDPN (229 aa)) are disordered. Phosphoserine is present on residues Ser1005 and Ser1016. Position 1032 is a phosphothreonine (Thr1032). Polar residues-rich tracts occupy residues 1046 to 1057 (KPVSLQKSSSEL), 1082 to 1100 (STAPDEISTSTKNSGVSTT), and 1130 to 1145 (KLNTSQEHSIKVSPSN). Ser1095 carries the phosphoserine modification.

Belongs to the synaptojanin family. It in the central section; belongs to the inositol 1,4,5-trisphosphate 5-phosphatase family. Interacts (via SAC domain) with BSP1; the interaction is direct. Interacts with ABP1.

The protein localises to the cytoplasm. It localises to the cytoskeleton. It is found in the actin patch. The enzyme catalyses a 1,2-diacyl-sn-glycero-3-phospho-(1D-myo-inositol-4,5-bisphosphate) + H2O = a 1,2-diacyl-sn-glycero-3-phospho-(1D-myo-inositol 4-phosphate) + phosphate. Dephosphorylates a number of phosphatidylinositols (PIs) like phosphatidylinositol 4,5-bisphosphate (PtdIns(4,5)P2), but also phosphatidylinositol 3-phosphate (PtdIns(3)P), phosphatidylinositol 4-phosphate (PtdIns(4)P), and phosphatidylinositol 3,5-bisphosphate (PtdIns(3,5)P2). Controls the cellular levels and subcellular distribution of phosphatidylinositol 3-phosphate and phosphatidylinositol 4,5-bisphosphate. Specifically functions within the early endocytic pathway and actin organization. This chain is Polyphosphatidylinositol phosphatase INP52, found in Saccharomyces cerevisiae (strain ATCC 204508 / S288c) (Baker's yeast).